A 187-amino-acid chain; its full sequence is UPF0301 protein plu1183 (187 aa).

The protein belongs to the UPF0301 (AlgH) family.

The chain is UPF0301 protein plu1183 from Photorhabdus laumondii subsp. laumondii (strain DSM 15139 / CIP 105565 / TT01) (Photorhabdus luminescens subsp. laumondii).